The following is a 418-amino-acid chain: Serine hydroxymethyltransferase (418 aa).

Residues Leu121 and 125-127 (GHL) each bind (6S)-5,6,7,8-tetrahydrofolate. Residue Lys230 is modified to N6-(pyridoxal phosphate)lysine. Residues Glu246 and 355–357 (SPF) contribute to the (6S)-5,6,7,8-tetrahydrofolate site.

The protein belongs to the SHMT family. As to quaternary structure, homodimer. It depends on pyridoxal 5'-phosphate as a cofactor.

It localises to the cytoplasm. The catalysed reaction is (6R)-5,10-methylene-5,6,7,8-tetrahydrofolate + glycine + H2O = (6S)-5,6,7,8-tetrahydrofolate + L-serine. It participates in one-carbon metabolism; tetrahydrofolate interconversion. It functions in the pathway amino-acid biosynthesis; glycine biosynthesis; glycine from L-serine: step 1/1. In terms of biological role, catalyzes the reversible interconversion of serine and glycine with tetrahydrofolate (THF) serving as the one-carbon carrier. This reaction serves as the major source of one-carbon groups required for the biosynthesis of purines, thymidylate, methionine, and other important biomolecules. Also exhibits THF-independent aldolase activity toward beta-hydroxyamino acids, producing glycine and aldehydes, via a retro-aldol mechanism. The polypeptide is Serine hydroxymethyltransferase (Streptococcus pneumoniae serotype 2 (strain D39 / NCTC 7466)).